A 632-amino-acid polypeptide reads, in one-letter code: Putative ferric transport system permease protein FbpB 1 (632 aa).

Transmembrane regions (helical) follow at residues 5–25, 37–57, 58–78, 93–113, 144–164, 178–198, 223–243, 270–290, 299–319, 330–350, 377–397, 436–456, 469–489, 490–510, and 547–567; these read SFNLTWAWFLPVIVYGALPLL, LFLTALSVLFMFISATVYKIS, MGYSVIVLLVGYTALATLSLA, LLCIILLIFFFIVYPTLAIFV, LFLSGFVGIVSTVFGLAFALY, IFSILPIVTPPFVVGLGVTLM, GFNGIAIAQILAFAPISFMIL, YQIIFPLLRPALANSFLIVFI, PLVLGGSFDVIATQIYFYIAG, LGSMLLIFSLAIFIIQYIWIG, IIGMLGFWVIFNMALYGSIFY, IYAGIAAPLTAFFGLLIAYIV, FLTMLCFAVPGTVAGVSYILA, FNNAPLYITGTGIIVIISMVM, and CFIVLPLLKPALLSALVTSFV. Residues 140–345 form the ABC transmembrane type-1 1 domain; it reads ITNSLFLSGF…IFSLAIFIIQ (206 aa). Residues 431 to 632 enclose the ABC transmembrane type-1 2 domain; it reads LINTLIYAGI…DCRRYAYFPF (202 aa).

It belongs to the binding-protein-dependent transport system permease family. FbpB subfamily. As to quaternary structure, the complex is composed of two ATP-binding proteins (FbpC), two transmembrane proteins (FbpB) and a solute-binding protein (FbpA).

The protein resides in the cell inner membrane. Its function is as follows. Part of the ABC transporter complex FbpABC (TC 3.A.1.10.1) involved in Fe(3+) ions import. Probably responsible for the translocation of the substrate across the membrane. The sequence is that of Putative ferric transport system permease protein FbpB 1 (fbpB1) from Haemophilus influenzae (strain ATCC 51907 / DSM 11121 / KW20 / Rd).